Here is a 180-residue protein sequence, read N- to C-terminus: Ribosome maturation factor RimM (180 aa).

Residues 104–177 (PEEFHDHQLV…RVVVDPPGGL (74 aa)) form the PRC barrel domain.

This sequence belongs to the RimM family. Binds ribosomal protein uS19.

It localises to the cytoplasm. In terms of biological role, an accessory protein needed during the final step in the assembly of 30S ribosomal subunit, possibly for assembly of the head region. Essential for efficient processing of 16S rRNA. May be needed both before and after RbfA during the maturation of 16S rRNA. It has affinity for free ribosomal 30S subunits but not for 70S ribosomes. In Salinispora tropica (strain ATCC BAA-916 / DSM 44818 / JCM 13857 / NBRC 105044 / CNB-440), this protein is Ribosome maturation factor RimM.